Consider the following 430-residue polypeptide: Proteinase-activated receptor 1 (430 aa).

Residues 1–21 (MGPRRLLIVALGLSLCGPLLS) form the signal peptide. A propeptide spans 22-41 (SRVPMSQPESERTDATVNPR) (removed for receptor activation). Over 42–107 (SFFLRNPSEN…SGYLTSPWLT (66 aa)) the chain is Extracellular. Residues Asn67 and Asn80 are each glycosylated (N-linked (GlcNAc...) asparagine). A helical transmembrane segment spans residues 108 to 133 (LFMPSVYTIVFIVSLPLNVLAIAVFV). Over 134 to 142 (LRMKVKKPA) the chain is Cytoplasmic. Residues 143–162 (VVYMLHLAMADVLFVSVLPF) form a helical membrane-spanning segment. At 163 to 181 (KISYYFSGTDWQFGSGMCR) the chain is on the extracellular side. A disulfide bridge links Cys180 with Cys259. The chain crosses the membrane as a helical span at residues 182–203 (FATAAFYGNMYASIMLMTVISI). Residues 204 to 223 (DRFLAVVYPIQSLSWRTLGR) are Cytoplasmic-facing. Residues 224–244 (ANFTCVVIWVMAIMGVVPLLL) traverse the membrane as a helical segment. Residues 245 to 273 (KEQTTRVPGLNITTCHDVLSENLMQGFYS) lie on the Extracellular side of the membrane. A glycan (N-linked (GlcNAc...) asparagine) is linked at Asn255. Residues 274–293 (YYFSAFSAIFFLVPLIVSTV) traverse the membrane as a helical segment. Over 294–316 (CYTSIIRCLSSSAVANRSKKSRA) the chain is Cytoplasmic. A helical transmembrane segment spans residues 317–339 (LFLSAAVFCIFIVCFGPTNVLLI). The Extracellular segment spans residues 340-354 (VHYLFLSDSPGTEAA). Residues 355–379 (YFAYLLCVCVSSVSCCIDPLIYYYA) form a helical membrane-spanning segment. Residues 380–430 (SSECQRHLYSILCCKESSDPNSCNSTGQLMPSKMDTCSSHLNNSIYKKLLA) are Cytoplasmic-facing. Phosphoserine is present on Ser423.

The protein belongs to the G-protein coupled receptor 1 family. In terms of processing, proteolytic cleavage by thrombin generates a new N-terminus that functions as a tethered ligand. Also proteolytically cleaved by cathepsin CTSG. Post-translationally, phosphorylated in the C-terminal tail; probably mediating desensitization prior to the uncoupling and internalization of the receptor.

Its subcellular location is the cell membrane. In terms of biological role, high affinity receptor that binds the activated thrombin, leading to calcium release from intracellular stores. The thrombin-activated receptor signaling pathway is mediated through PTX-insensitive G proteins, activation of phospholipase C resulting in the production of 1D-myo-inositol 1,4,5-trisphosphate (InsP3) which binds to InsP3 receptors causing calcium release from the stores. In astrocytes, the calcium released into the cytosol allows the Ca(2+)-dependent release of L-glutamate into the synaptic cleft through BEST1, that targets the neuronal postsynaptic GRIN2A/NMDAR receptor resulting in the synaptic plasticity regulation. May play a role in platelets activation and in vascular development. Mediates up-regulation of pro-inflammatory cytokines, such as MCP-1/CCL2 and IL6, triggered by coagulation factor Xa (F10) in cardiac fibroblasts and umbilical vein endothelial cells. This is Proteinase-activated receptor 1 from Mus musculus (Mouse).